The primary structure comprises 345 residues: uncharacterized protein (345 aa).

Solcar repeat units lie at residues 80-153 (MSFF…MKSR), 162-246 (SDPQ…LKLK), and 256-339 (NLAH…ILNF). 6 consecutive transmembrane segments (helical) span residues 83-103 (FEAL…LFPI), 128-148 (GLGS…TTYE), 220-240 (AGYG…FPIW), 262-282 (AISG…FDVV), 296-316 (VFTI…KGIV), and 319-339 (VLWL…ILNF).

The protein belongs to the mitochondrial carrier (TC 2.A.29) family.

Its subcellular location is the mitochondrion inner membrane. This is an uncharacterized protein from Schizosaccharomyces pombe (strain 972 / ATCC 24843) (Fission yeast).